The sequence spans 921 residues: Sodium/calcium exchanger 2 (921 aa).

A signal peptide spans 1 to 20 (MAPLALVGVTLLLAAPPCSG). Residues 21 to 68 (AATPTPSLPPPPANDSDTSTGGCQGSYRCQPGVLLPVWEPDDPSLGDK) are Extracellular-facing. A disordered region spans residues 22 to 42 (ATPTPSLPPPPANDSDTSTGG). A glycan (N-linked (GlcNAc...) asparagine) is linked at Asn-34. Residues 69–90 (AARAVVYFVAMVYMFLGVSIIA) form a helical membrane-spanning segment. Residues 91–130 (DRFMAAIEVITSKEKEITITKANGETSVGTVRIWNETVSN) lie on the Cytoplasmic side of the membrane. A helical membrane pass occupies residues 131-152 (LTLMALGSSAPEILLSVIEVCG). Residues 135 to 175 (ALGSSAPEILLSVIEVCGHNFQAGELGPGTIVGSAAFNMFV) form an Alpha-1 repeat. The Extracellular portion of the chain corresponds to 153–164 (HNFQAGELGPGT). A helical membrane pass occupies residues 165–185 (IVGSAAFNMFVVIAVCIYVIP). Residues 186 to 196 (AGESRKIKHLR) are Cytoplasmic-facing. The helical transmembrane segment at 197 to 219 (VFFVTASWSIFAYVWLYLILAVF) threads the bilayer. Residues 220 to 222 (SPG) lie on the Extracellular side of the membrane. Residues 223-246 (VVQVWEALLTLVFFPVCVVFAWMA) form a helical membrane-spanning segment. Topologically, residues 247 to 720 (DKRLLFYKYV…DGSREERLPS (474 aa)) are cytoplasmic. A putative calmodulin-binding region region spans residues 248 to 267 (KRLLFYKYVYKRYRTDPRSG). Calx-beta domains lie at 384–483 (GAGE…VRLL) and 512–612 (ATVT…IELG). 14 residues coordinate Ca(2+): Glu-407, Asp-443, Asp-468, Asp-469, Ile-471, Glu-473, Glu-476, Asp-518, Asp-519, Asp-520, Glu-536, Asp-598, Glu-599, and Glu-600. Residue Ser-622 is modified to Phosphoserine. Glu-665 contacts Ca(2+). The chain crosses the membrane as a helical span at residues 721-740 (CFDYVMHFLTVFWKVLFACV). Residues 741–747 (PPTEYCH) are Extracellular-facing. Residues 748–770 (GWACFGVSILVIGLLTALIGDLA) form a helical membrane-spanning segment. At 771–772 (SH) the chain is on the cytoplasmic side. A helical membrane pass occupies residues 773-791 (FGCTVGLKDSVNAVVFVAL). The stretch at 790–826 (ALGTSIPDTFASKVAALQDQCADASIGNVTGSNAVNV) is one Alpha-2 repeat. Residues 792-822 (GTSIPDTFASKVAALQDQCADASIGNVTGSN) lie on the Extracellular side of the membrane. The N-linked (GlcNAc...) asparagine glycan is linked to Asn-817. A helical membrane pass occupies residues 823-843 (AVNVFLGLGVAWSVAAVYWAV). Topologically, residues 844–854 (QGRPFEVRTGT) are cytoplasmic. A helical membrane pass occupies residues 855–875 (LAFSVTLFTVFAFVGIAVLLY). Residues 876–892 (RRRPHIGGELGGPRGPK) are Extracellular-facing. Residues 893–909 (LATTALFLGLWLLYILF) form a helical membrane-spanning segment. Over 910-921 (ASLEAYCHIRGF) the chain is Cytoplasmic.

The protein belongs to the Ca(2+):cation antiporter (CaCA) (TC 2.A.19) family. SLC8 subfamily.

The protein localises to the cell membrane. It localises to the basolateral cell membrane. It is found in the perikaryon. Its subcellular location is the cell projection. The protein resides in the dendrite. The protein localises to the dendritic spine. The catalysed reaction is Ca(2+)(in) + 3 Na(+)(out) = Ca(2+)(out) + 3 Na(+)(in). Calcium transport is down-regulated by Na(+) and stimulated by Ca(2+). Functionally, mediates the electrogenic exchange of Ca(2+) against Na(+) ions across the cell membrane, and thereby contributes to the regulation of cytoplasmic Ca(2+) levels and Ca(2+)-dependent cellular processes. Contributes to cellular Ca(2+) homeostasis in excitable cells. Contributes to the rapid decrease of cytoplasmic Ca(2+) levels back to baseline after neuronal activation, and thereby contributes to modulate synaptic plasticity, learning and memory. Plays a role in regulating urinary Ca(2+) and Na(+) excretion. The protein is Sodium/calcium exchanger 2 (SLC8A2) of Homo sapiens (Human).